The sequence spans 806 residues: Leucine--tRNA ligase (806 aa).

The short motif at 38–48 is the 'HIGH' region element; sequence PYPSGEIHMGH. The 'KMSKS' region signature appears at 572–576; the sequence is KMSKS. An ATP-binding site is contributed by lysine 575.

The protein belongs to the class-I aminoacyl-tRNA synthetase family.

It localises to the cytoplasm. It carries out the reaction tRNA(Leu) + L-leucine + ATP = L-leucyl-tRNA(Leu) + AMP + diphosphate. This Helicobacter pylori (strain J99 / ATCC 700824) (Campylobacter pylori J99) protein is Leucine--tRNA ligase.